We begin with the raw amino-acid sequence, 160 residues long: Inner membrane protein YcdZ (160 aa).

Transmembrane regions (helical) follow at residues 20–42 (WGAVSLGLLSWAGFLGCTAYFAC), 50–70 (LLISACTLLSGMVWALVIIHG), 72–92 (ALAPHLEIVSYVLTGIVAFLM), 99–119 (LLLSFVPGTFIGACATFAGQG), and 123–143 (LVLPSLALGLIFGYAMKNSGL).

To E.coli YahC.

The protein resides in the cell inner membrane. This Salmonella typhimurium (strain LT2 / SGSC1412 / ATCC 700720) protein is Inner membrane protein YcdZ (ycdZ).